Reading from the N-terminus, the 504-residue chain is Probable ergothioneine transporter EgtUBC (504 aa).

The 180-residue stretch at 19 to 198 folds into the ABC transmembrane type-1 domain; that stretch reads MIEHIQISFI…LLAIIFDLIL (180 aa). The next 6 membrane-spanning stretches (helical) occupy residues 25-45, 49-69, 70-90, 145-165, 178-198, and 209-229; these read ISFI…ILLT, TISE…SLAL, LGLM…ALVV, AMVL…GGLG, SLIL…DLIL, and LLMT…IPMF. The interval 231-504 is ergothioneine binding domain; it reads QKGDKITLAG…DYLKAKGLIK (274 aa).

In the N-terminal section; belongs to the binding-protein-dependent transport system permease family. This sequence in the C-terminal section; belongs to the OsmX family. The complex is probably composed of at least an ATP-binding protein (EgtUA) and a transmembrane protein (EgtUBC).

The protein localises to the membrane. Its function is as follows. Part of an ABC transporter complex EgtU required for the uptake of ergothioneine (EGT), a natural low-molecular weight (LMW) thiol antioxidant. Responsible for the translocation of the substrate across the membrane. Also contains a C-terminal periplasmic solute-binding domain (SBD) which binds to EGT with sub-micromolar affinity. Probably does not bind L-hercynine. This is Probable ergothioneine transporter EgtUBC (egtUBC) from Staphylococcus aureus (strain USA300).